The following is a 198-amino-acid chain: MDSLQKQDLRRPKIHGAVQASPYQPPTLASLQRLLWVRQAATLNHIDEVWPSLFLGDAYAARDKSKLIQLGITHVVNAAAGKFQVDTGAKFYRGMSLEYYGIEADDNPFFDLSVYFLPVARYIRAALSVPQGRVLVHCAMGVSRSATLVLAFLMICENMTLVEAIQTVQAHRNICPNSGFLRQLQVLDNRLGRETGRF.

A Tyrosine-protein phosphatase domain is found at 45-193 (HIDEVWPSLF…LQVLDNRLGR (149 aa)). Cys138 functions as the Phosphocysteine intermediate in the catalytic mechanism.

This sequence belongs to the protein-tyrosine phosphatase family. Non-receptor class dual specificity subfamily. As to expression, highly expressed in the testis (at protein level). Also found in the skeletal muscle.

The catalysed reaction is O-phospho-L-tyrosyl-[protein] + H2O = L-tyrosyl-[protein] + phosphate. The enzyme catalyses O-phospho-L-seryl-[protein] + H2O = L-seryl-[protein] + phosphate. It carries out the reaction O-phospho-L-threonyl-[protein] + H2O = L-threonyl-[protein] + phosphate. Functionally, dual specificity phosphatase that dephosphorylates MAPK8/JNK and MAPK14/p38, but not MAPK1/ERK2, in vitro. Exhibits intrinsic phosphatase activity towards both phospho-seryl/threonyl and -tyrosyl residues, with similar specific activities in vitro. The chain is Dual specificity protein phosphatase 13B from Homo sapiens (Human).